A 406-amino-acid chain; its full sequence is Argininosuccinate synthase (406 aa).

8–16 serves as a coordination point for ATP; that stretch reads AYSGGLDTS. Tyrosine 86 contacts L-citrulline. An ATP-binding site is contributed by glycine 116. L-aspartate-binding residues include threonine 118, asparagine 122, and aspartate 123. Position 122 (asparagine 122) interacts with L-citrulline. Positions 126, 174, 183, 259, and 271 each coordinate L-citrulline.

Belongs to the argininosuccinate synthase family. Type 1 subfamily. Homotetramer.

The protein resides in the cytoplasm. It catalyses the reaction L-citrulline + L-aspartate + ATP = 2-(N(omega)-L-arginino)succinate + AMP + diphosphate + H(+). The protein operates within amino-acid biosynthesis; L-arginine biosynthesis; L-arginine from L-ornithine and carbamoyl phosphate: step 2/3. In Dehalococcoides mccartyi (strain ATCC BAA-2266 / KCTC 15142 / 195) (Dehalococcoides ethenogenes (strain 195)), this protein is Argininosuccinate synthase.